A 1380-amino-acid polypeptide reads, in one-letter code: Inverted formin-2 (1380 aa).

The GBD/FH3 domain maps to Met1–Gln330. Disordered stretches follow at residues Leu341–Pro391 and Ile440–Leu541. Residues Thr343–Lys352 show a composition bias toward basic residues. Positions Gln367–Pro385 are enriched in basic and acidic residues. The 161-residue stretch at Val432 to Ala592 folds into the FH1 domain. Pro residues-rich tracts occupy residues Leu446–Pro470 and Thr478–Leu541. The FH2 domain maps to Tyr593–Asp981. 2 coiled-coil regions span residues Leu879–Asp930 and Leu956–Asn991. One can recognise a WH2 domain in the interval Asp1009 to Thr1024. 3 disordered regions span residues Lys1026–Asp1049, His1188–Ala1244, and Phe1260–Gln1380. Composition is skewed to polar residues over residues Gly1206 to Ala1244, Phe1260 to Arg1284, and Thr1294 to Ser1303. Over residues Glu1306 to Gly1322 the composition is skewed to basic and acidic residues. Low complexity predominate over residues Ser1328–Ser1339. Positions Val1345 to Ser1359 are enriched in basic residues.

This sequence belongs to the formin homology family.

The protein is Inverted formin-2 (inf2) of Xenopus tropicalis (Western clawed frog).